The primary structure comprises 418 residues: AP-1 complex subunit mu (418 aa).

Residues 176-417 (NNEAYFDVTE…VTKAGKFQVR (242 aa)) enclose the MHD domain.

The protein belongs to the adaptor complexes medium subunit family. As to quaternary structure, adaptor protein complex 1 (AP-1) is a heterotetramer composed of two large adaptins (gamma- and beta'-type subunits), a medium adaptin (mu-type subunit AP47) and a small adaptin (sigma-type subunit AP19). Regulated by phosphorylation.

The protein localises to the golgi apparatus. The protein resides in the cytoplasmic vesicle. Its subcellular location is the clathrin-coated vesicle membrane. In terms of biological role, component of the adapter complexes which link clathrin to receptors in coated vesicles. Clathrin-associated protein complexes are believed to interact with the cytoplasmic tails of membrane proteins, leading to their selection and concentration. AP47 is a subunit of the plasma membrane adapter. The sequence is that of AP-1 complex subunit mu from Diplobatis ommata (Ocellated electric ray).